A 578-amino-acid chain; its full sequence is Poly(A) RNA polymerase cid13 (578 aa).

Asp110 and Asp112 together coordinate Mg(2+). Residues 275–330 (SLGILFVEFFRFFGYLFDYEHFVLSIRHGTFLSKRAKGWQFQLNNFLCVEEPFHTS) form the PAP-associated domain. The interval 495-565 (SHHFDERHGG…SEVVSPVSLH (71 aa)) is disordered. Residues 496–510 (HHFDERHGGDRHEKN) show a composition bias toward basic and acidic residues. Residues 516-527 (RYSRNKFHKKKQ) show a composition bias toward basic residues. The segment covering 547–565 (NSPPSNSSSSEVVSPVSLH) has biased composition (low complexity).

The protein belongs to the DNA polymerase type-B-like family. In terms of assembly, interacts with pab1. Mg(2+) serves as cofactor. The cofactor is Mn(2+).

Its subcellular location is the cytoplasm. It localises to the nucleus. The catalysed reaction is RNA(n) + ATP = RNA(n)-3'-adenine ribonucleotide + diphosphate. In terms of biological role, polymerase that creates the 3' poly(A) tail of suc22 mRNA. The chain is Poly(A) RNA polymerase cid13 (cid13) from Schizosaccharomyces pombe (strain 972 / ATCC 24843) (Fission yeast).